Reading from the N-terminus, the 1171-residue chain is ATP-dependent helicase/deoxyribonuclease subunit B (1171 aa).

The UvrD-like helicase ATP-binding domain occupies 1-343 (MSLRFVIGRA…LVAEENYRYR (343 aa)). Residue 8–15 (GRAGSGKS) coordinates ATP. One can recognise a UvrD-like helicase C-terminal domain in the interval 281-587 (MEQPRFHSPA…QFANIPPSLD (307 aa)). [4Fe-4S] cluster-binding residues include Cys805, Cys1129, Cys1132, and Cys1138.

The protein belongs to the helicase family. AddB/RexB type 1 subfamily. As to quaternary structure, heterodimer of AddA and AddB. Requires Mg(2+) as cofactor. The cofactor is [4Fe-4S] cluster.

Its function is as follows. The heterodimer acts as both an ATP-dependent DNA helicase and an ATP-dependent, dual-direction single-stranded exonuclease. Recognizes the chi site generating a DNA molecule suitable for the initiation of homologous recombination. The AddB subunit has 5' -&gt; 3' nuclease activity but not helicase activity. The chain is ATP-dependent helicase/deoxyribonuclease subunit B from Bacillus thuringiensis (strain Al Hakam).